The following is a 102-amino-acid chain: MQKIRKGDKVVMLAGKDKGRTGEVVQVMPKEDRAVVRGVNVVKRHQRQTQTQEAGIINKEAPVHLSNIAIVDKDGKPTRVGFKVVDGKKVRVAKRSGEVIDG.

The protein belongs to the universal ribosomal protein uL24 family. Part of the 50S ribosomal subunit.

In terms of biological role, one of two assembly initiator proteins, it binds directly to the 5'-end of the 23S rRNA, where it nucleates assembly of the 50S subunit. Functionally, one of the proteins that surrounds the polypeptide exit tunnel on the outside of the subunit. In Rhizobium etli (strain CIAT 652), this protein is Large ribosomal subunit protein uL24.